We begin with the raw amino-acid sequence, 62 residues long: Kininogen-1 (62 aa).

The first 22 residues, M1–C22, serve as a signal peptide directing secretion. Residues E24–Y62 are disordered. The segment covering E30–S42 has biased composition (acidic residues). Position 54 is a 4-hydroxyproline; partial (P54). Y62 carries the sulfotyrosine modification.

Belongs to the frog skin active peptide (FSAP) family. Bradykinin-related peptide subfamily. Expressed by the skin glands.

It is found in the secreted. Its function is as follows. Inhibits ACE with a Ki of 1.6 uM, and targets B2 bradykinin receptor (BDKRB2). Provokes contraction of smooth muscle preparation (ileum). In vivo, induces an early hyperalgesic effects in living rats after intraplantar injection. The protein is Kininogen-1 of Phyllomedusa sauvagei (Sauvage's leaf frog).